Reading from the N-terminus, the 272-residue chain is HMP-PP phosphatase (272 aa).

Asp8 serves as the catalytic Nucleophile. Mg(2+) contacts are provided by Asp8, Asp10, and Asp212.

Belongs to the HAD-like hydrolase superfamily. Cof family. Mg(2+) serves as cofactor.

The enzyme catalyses 4-amino-2-methyl-5-(diphosphooxymethyl)pyrimidine + H2O = 4-amino-2-methyl-5-(phosphooxymethyl)pyrimidine + phosphate + H(+). Functionally, catalyzes the hydrolysis of 4-amino-2-methyl-5-hydroxymethylpyrimidine pyrophosphate (HMP-PP) to 4-amino-2-methyl-5-hydroxymethylpyrimidine phosphate (HMP-P). The protein is HMP-PP phosphatase of Salmonella typhi.